We begin with the raw amino-acid sequence, 93 residues long: UPF0473 protein RBAM_024480 (93 aa).

This sequence belongs to the UPF0473 family.

The sequence is that of UPF0473 protein RBAM_024480 from Bacillus velezensis (strain DSM 23117 / BGSC 10A6 / LMG 26770 / FZB42) (Bacillus amyloliquefaciens subsp. plantarum).